The following is a 273-amino-acid chain: uncharacterized protein (273 aa).

Transmembrane regions (helical) follow at residues V24–L44 and I103–A123. The tract at residues S132–R194 is disordered. Residues S164 to T179 are compositionally biased toward basic residues. The span at T183 to P192 shows a compositional bias: low complexity.

Its subcellular location is the cell membrane. This is an uncharacterized protein from Sinorhizobium fredii (strain NBRC 101917 / NGR234).